A 693-amino-acid polypeptide reads, in one-letter code: UvrABC system protein B (693 aa).

One can recognise a Helicase ATP-binding domain in the interval 35–188 (ERIKNGEKDV…DDLLRKFVSM (154 aa)). 48–55 (GATGTGKS) provides a ligand contact to ATP. A Beta-hairpin motif is present at residues 101 to 124 (YYDYYQPEAYVAQTDTFIEKDSSV). Residues 438–604 (QIDDLLGEIK…PLRKKIADIT (167 aa)) form the Helicase C-terminal domain. Residues 648 to 683 (VGLIEQLTEQMHAAAGELQFELAARLRDEVGELKKE) form the UVR domain.

The protein belongs to the UvrB family. In terms of assembly, forms a heterotetramer with UvrA during the search for lesions. Interacts with UvrC in an incision complex.

The protein localises to the cytoplasm. Its function is as follows. The UvrABC repair system catalyzes the recognition and processing of DNA lesions. A damage recognition complex composed of 2 UvrA and 2 UvrB subunits scans DNA for abnormalities. Upon binding of the UvrA(2)B(2) complex to a putative damaged site, the DNA wraps around one UvrB monomer. DNA wrap is dependent on ATP binding by UvrB and probably causes local melting of the DNA helix, facilitating insertion of UvrB beta-hairpin between the DNA strands. Then UvrB probes one DNA strand for the presence of a lesion. If a lesion is found the UvrA subunits dissociate and the UvrB-DNA preincision complex is formed. This complex is subsequently bound by UvrC and the second UvrB is released. If no lesion is found, the DNA wraps around the other UvrB subunit that will check the other stand for damage. The protein is UvrABC system protein B of Arthrobacter sp. (strain FB24).